Reading from the N-terminus, the 173-residue chain is Crossover junction endodeoxyribonuclease RuvC (173 aa).

Catalysis depends on residues D8, E67, and D139. Mg(2+) is bound by residues D8, E67, and D139.

Belongs to the RuvC family. Homodimer which binds Holliday junction (HJ) DNA. The HJ becomes 2-fold symmetrical on binding to RuvC with unstacked arms; it has a different conformation from HJ DNA in complex with RuvA. In the full resolvosome a probable DNA-RuvA(4)-RuvB(12)-RuvC(2) complex forms which resolves the HJ. It depends on Mg(2+) as a cofactor.

The protein localises to the cytoplasm. The enzyme catalyses Endonucleolytic cleavage at a junction such as a reciprocal single-stranded crossover between two homologous DNA duplexes (Holliday junction).. The RuvA-RuvB-RuvC complex processes Holliday junction (HJ) DNA during genetic recombination and DNA repair. Endonuclease that resolves HJ intermediates. Cleaves cruciform DNA by making single-stranded nicks across the HJ at symmetrical positions within the homologous arms, yielding a 5'-phosphate and a 3'-hydroxyl group; requires a central core of homology in the junction. The consensus cleavage sequence is 5'-(A/T)TT(C/G)-3'. Cleavage occurs on the 3'-side of the TT dinucleotide at the point of strand exchange. HJ branch migration catalyzed by RuvA-RuvB allows RuvC to scan DNA until it finds its consensus sequence, where it cleaves and resolves the cruciform DNA. The chain is Crossover junction endodeoxyribonuclease RuvC from Vibrio parahaemolyticus serotype O3:K6 (strain RIMD 2210633).